The sequence spans 449 residues: Histidinol dehydrogenase (449 aa).

Tyr135, Gln199, and Asn229 together coordinate NAD(+). 3 residues coordinate substrate: Thr252, Gln274, and His277. Residues Gln274 and His277 each contribute to the Zn(2+) site. Residues Glu343 and His344 each act as proton acceptor in the active site. Substrate contacts are provided by His344, Asp377, Glu431, and His436. Residue Asp377 participates in Zn(2+) binding. His436 contributes to the Zn(2+) binding site.

Belongs to the histidinol dehydrogenase family. Zn(2+) serves as cofactor.

It catalyses the reaction L-histidinol + 2 NAD(+) + H2O = L-histidine + 2 NADH + 3 H(+). It functions in the pathway amino-acid biosynthesis; L-histidine biosynthesis; L-histidine from 5-phospho-alpha-D-ribose 1-diphosphate: step 9/9. Catalyzes the sequential NAD-dependent oxidations of L-histidinol to L-histidinaldehyde and then to L-histidine. This is Histidinol dehydrogenase from Corynebacterium diphtheriae (strain ATCC 700971 / NCTC 13129 / Biotype gravis).